The primary structure comprises 293 residues: Homoserine kinase (293 aa).

83-93 lines the ATP pocket; sequence PITRGMGSSSA.

It belongs to the GHMP kinase family. Homoserine kinase subfamily.

It localises to the cytoplasm. The enzyme catalyses L-homoserine + ATP = O-phospho-L-homoserine + ADP + H(+). It functions in the pathway amino-acid biosynthesis; L-threonine biosynthesis; L-threonine from L-aspartate: step 4/5. Its function is as follows. Catalyzes the ATP-dependent phosphorylation of L-homoserine to L-homoserine phosphate. The polypeptide is Homoserine kinase (Helicobacter pylori (strain ATCC 700392 / 26695) (Campylobacter pylori)).